We begin with the raw amino-acid sequence, 417 residues long: Methyltransferase/ribosomally synthesized cyclic peptide dendrothelin A precursor dbihMA (417 aa).

The segment at 1–251 (MESSTQTKPG…GVSTFYIPPK (251 aa)) is methyltransferase domain. Catalysis depends on residues R72, Y76, and Y98. 8 residues coordinate S-adenosyl-L-methionine: Y98, H100, V103, A130, Q172, A213, S244, and T245. Residues 252–378 (ARKDINTDII…WAIRCAMKNM (127 aa)) form a clasp domain region. Positions 379 to 399 (PSSLLEAASQSVEEASMNGFP) are precursor leader. N-methylvaline is present on residues V401 and V403. At T404 the chain carries N-methylthreonine. G405 is modified (N-methylglycine). The residue at position 406 (I406) is an N-methylisoleucine. Residue V407 is modified to N-methylvaline. G408 bears the N-methylglycine mark. I410 carries the N-methylisoleucine modification. Residue G411 is modified to N-methylglycine. Position 413 is an N-methylvaline (V413).

In the N-terminal section; belongs to the precorrin methyltransferase family. Homodimer. Post-translationally, dbiMA automethylates at Val-401, Val-403, Thr-404, Gly-405, Ile-406, Val-407, Gly-408, Ile-410, Gly-411 and Val-413 before being processed by the prolyloligopeptidase dbiP which likely forms a peptidyl ester upon removal of the follower propeptide, which then undergoes macrocyclization with the N-terminus of the modified core peptide. Peptide backbone alpha-N-methylations change the physicochemical properties of amide bonds to provide structural constraints and other favorable characteristics including biological membrane permeability to peptides.

It functions in the pathway mycotoxin biosynthesis. In terms of biological role, fusion protein of the methyltransferase dbiM and the dendrothelin core peptide; part of the gene cluster that mediates the biosynthesis of dendrothelin A, a highly methylated cyclic dodecapeptide showing slight nematodicidal activity. Dendrothelin A derives from the C-terminus of the dbiMA protein, and it is the dbiMA protein that methylates its own C-terminus using S-adenosyl methionine (SAM). The C-terminus is subsequently cleaved off and macrocyclized by the prolyloligopeptidase dbiP to give the final product. This is Methyltransferase/ribosomally synthesized cyclic peptide dendrothelin A precursor dbihMA from Dendrothele bispora (strain CBS 962.96).